The primary structure comprises 345 residues: Thylakoid lumenal 29 kDa protein, chloroplastic (345 aa).

It belongs to the peroxidase family.

The protein localises to the plastid. Its subcellular location is the chloroplast thylakoid lumen. This Solanum lycopersicum (Tomato) protein is Thylakoid lumenal 29 kDa protein, chloroplastic (CLEB3J9).